Here is a 1038-residue protein sequence, read N- to C-terminus: Inner tegument protein (1038 aa).

The interaction with large tegument protein stretch occupies residues 545–1038 (WGITPPVDVG…VPGNTSGSDP (494 aa)).

This sequence belongs to the herpesviridae inner tegument protein family. In terms of assembly, interacts (via C-terminus) with the large tegument protein/LTP (via N-terminus).

Its subcellular location is the virion tegument. It is found in the host cytoplasm. The protein resides in the host nucleus. It localises to the host Golgi apparatus. The protein localises to the host trans-Golgi network. Plays an essential role in cytoplasmic secondary envelopment during viral egress. Interacts with the capsid via the large tegument protein/LTP and participates in its transport to the host trans-Golgi network (TGN) where secondary envelopment occurs. Modulates tegumentation and capsid accumulation at the viral assembly complex. This chain is Inner tegument protein (21), found in Homo sapiens (Human).